Reading from the N-terminus, the 312-residue chain is 1-phosphofructokinase (312 aa).

ATP is bound by residues 223–228 (SLGAEG) and 254–255 (GD). Asp255 (proton acceptor) is an active-site residue.

Belongs to the carbohydrate kinase PfkB family.

The catalysed reaction is beta-D-fructose 1-phosphate + ATP = beta-D-fructose 1,6-bisphosphate + ADP + H(+). Functionally, catalyzes the ATP-dependent phosphorylation of fructose-l-phosphate to fructose-l,6-bisphosphate. The protein is 1-phosphofructokinase (fruK) of Escherichia coli O157:H7.